We begin with the raw amino-acid sequence, 187 residues long: Adenine phosphoribosyltransferase (187 aa).

Belongs to the purine/pyrimidine phosphoribosyltransferase family. Homodimer.

The protein localises to the cytoplasm. The enzyme catalyses AMP + diphosphate = 5-phospho-alpha-D-ribose 1-diphosphate + adenine. The protein operates within purine metabolism; AMP biosynthesis via salvage pathway; AMP from adenine: step 1/1. Functionally, catalyzes a salvage reaction resulting in the formation of AMP, that is energically less costly than de novo synthesis. The polypeptide is Adenine phosphoribosyltransferase (Paracoccus denitrificans (strain Pd 1222)).